Reading from the N-terminus, the 483-residue chain is Probable cytochrome P450 517A1 (483 aa).

Residues 1–21 form a helical membrane-spanning segment; that stretch reads MEIINVFLFLIILFLVKDFVK. Heme is bound at residue Cys429.

The protein belongs to the cytochrome P450 family. Heme is required as a cofactor.

The protein localises to the membrane. This is Probable cytochrome P450 517A1 (cyp517A1) from Dictyostelium discoideum (Social amoeba).